A 124-amino-acid polypeptide reads, in one-letter code: Small ribosomal subunit protein uS12 (124 aa).

A 3-methylthioaspartic acid modification is found at Asp-89.

The protein belongs to the universal ribosomal protein uS12 family. In terms of assembly, part of the 30S ribosomal subunit. Contacts proteins S8 and S17. May interact with IF1 in the 30S initiation complex.

Functionally, with S4 and S5 plays an important role in translational accuracy. Its function is as follows. Interacts with and stabilizes bases of the 16S rRNA that are involved in tRNA selection in the A site and with the mRNA backbone. Located at the interface of the 30S and 50S subunits, it traverses the body of the 30S subunit contacting proteins on the other side and probably holding the rRNA structure together. The combined cluster of proteins S8, S12 and S17 appears to hold together the shoulder and platform of the 30S subunit. The chain is Small ribosomal subunit protein uS12 from Shewanella oneidensis (strain ATCC 700550 / JCM 31522 / CIP 106686 / LMG 19005 / NCIMB 14063 / MR-1).